The chain runs to 228 residues: UPF0173 metal-dependent hydrolase ABC2731 (228 aa).

This sequence belongs to the UPF0173 family.

The sequence is that of UPF0173 metal-dependent hydrolase ABC2731 from Shouchella clausii (strain KSM-K16) (Alkalihalobacillus clausii).